The following is a 407-amino-acid chain: Divalent metal cation transporter MntH (407 aa).

11 helical membrane-spanning segments follow: residues 16–36, 43–63, 95–115, 119–139, 152–172, 193–213, 239–259, 288–308, 318–338, 346–366, and 387–407; these read LTLL…GNFA, STFG…AMLV, WVQA…GAAV, LLLG…TWGI, FVVG…LVFS, AVYL…IYLH, IAMT…AAAF, LFGL…TLAG, FTIP…VVIA, ILVL…IPLL, and VGRL…VAMI.

Belongs to the NRAMP family.

The protein localises to the cell inner membrane. In terms of biological role, h(+)-stimulated, divalent metal cation uptake system. In Aeromonas hydrophila subsp. hydrophila (strain ATCC 7966 / DSM 30187 / BCRC 13018 / CCUG 14551 / JCM 1027 / KCTC 2358 / NCIMB 9240 / NCTC 8049), this protein is Divalent metal cation transporter MntH.